Consider the following 326-residue polypeptide: DNA-directed RNA polymerase subunit alpha (326 aa).

An alpha N-terminal domain (alpha-NTD) region spans residues 1–231 (MQSNSLLKPR…DQLSVFADLE (231 aa)). Positions 245–326 (IDPVLLRPVD…WPPAGLEKLG (82 aa)) are alpha C-terminal domain (alpha-CTD).

Belongs to the RNA polymerase alpha chain family. As to quaternary structure, homodimer. The RNAP catalytic core consists of 2 alpha, 1 beta, 1 beta' and 1 omega subunit. When a sigma factor is associated with the core the holoenzyme is formed, which can initiate transcription.

It catalyses the reaction RNA(n) + a ribonucleoside 5'-triphosphate = RNA(n+1) + diphosphate. In terms of biological role, DNA-dependent RNA polymerase catalyzes the transcription of DNA into RNA using the four ribonucleoside triphosphates as substrates. The protein is DNA-directed RNA polymerase subunit alpha of Aromatoleum aromaticum (strain DSM 19018 / LMG 30748 / EbN1) (Azoarcus sp. (strain EbN1)).